A 278-amino-acid chain; its full sequence is Indole-3-glycerol phosphate synthase (278 aa).

This sequence belongs to the TrpC family.

The catalysed reaction is 1-(2-carboxyphenylamino)-1-deoxy-D-ribulose 5-phosphate + H(+) = (1S,2R)-1-C-(indol-3-yl)glycerol 3-phosphate + CO2 + H2O. It participates in amino-acid biosynthesis; L-tryptophan biosynthesis; L-tryptophan from chorismate: step 4/5. The protein is Indole-3-glycerol phosphate synthase of Pseudomonas aeruginosa (strain LESB58).